The primary structure comprises 61 residues: MWIYRSQKSKNPDNLLQLLRVRKDYRGPLKPYSQQFSYAGSIVICPEKFKTSFCARSFCAL.

Functionally, controls the copy number in gene replication. This chain is Protein CopA/IncA (copA), found in Escherichia coli.